The following is a 909-amino-acid chain: ABC transporter A family member 10 (909 aa).

The next 7 helical transmembrane spans lie at V35 to V55, I320 to I340, F374 to L394, F406 to I426, A433 to G453, G465 to A485, and L507 to L527. S555 is modified (phosphoserine). Positions I587 to T824 constitute an ABC transporter domain. G625–T632 serves as a coordination point for ATP.

It belongs to the ABC transporter superfamily. ABCA family. CPR flippase (TC 3.A.1.211) subfamily.

It localises to the membrane. This chain is ABC transporter A family member 10 (ABCA10), found in Arabidopsis thaliana (Mouse-ear cress).